We begin with the raw amino-acid sequence, 471 residues long: 3-isopropylmalate dehydratase large subunit (471 aa).

Positions 347, 407, and 410 each coordinate [4Fe-4S] cluster.

It belongs to the aconitase/IPM isomerase family. LeuC type 1 subfamily. In terms of assembly, heterodimer of LeuC and LeuD. [4Fe-4S] cluster serves as cofactor.

It catalyses the reaction (2R,3S)-3-isopropylmalate = (2S)-2-isopropylmalate. It functions in the pathway amino-acid biosynthesis; L-leucine biosynthesis; L-leucine from 3-methyl-2-oxobutanoate: step 2/4. Catalyzes the isomerization between 2-isopropylmalate and 3-isopropylmalate, via the formation of 2-isopropylmaleate. This is 3-isopropylmalate dehydratase large subunit from Geobacillus kaustophilus (strain HTA426).